A 332-amino-acid chain; its full sequence is Ferrochelatase (332 aa).

2 residues coordinate Fe cation: H201 and E283.

This sequence belongs to the ferrochelatase family.

The protein localises to the cytoplasm. It catalyses the reaction heme b + 2 H(+) = protoporphyrin IX + Fe(2+). The protein operates within porphyrin-containing compound metabolism; protoheme biosynthesis; protoheme from protoporphyrin-IX: step 1/1. Its function is as follows. Catalyzes the ferrous insertion into protoporphyrin IX. The polypeptide is Ferrochelatase (Francisella tularensis subsp. holarctica (strain FTNF002-00 / FTA)).